A 657-amino-acid polypeptide reads, in one-letter code: Major core protein 4b (657 aa).

Positions 1–61 (MESDSNIAIE…ITEEDVISAG (61 aa)) are excised as a propeptide.

It belongs to the poxviridae protein P4b family. Post-translationally, the precursor is cleaved to a mature protein during virion maturation. Proteolytic cleavage of major core proteins P4a (A10L), P4b (A3L), and VP8 (L4R), which occurs at a late stage of core formation, is required for production of infectious mature virions (MV).

The protein resides in the virion. Its function is as follows. Major component of the virion core that undergoes proteolytic processing during the immature virion (IV) to mature virion (MV) transition. Essential for the formation of a structurally normal core. The protein is Major core protein 4b of Vertebrata (FPV).